A 118-amino-acid polypeptide reads, in one-letter code: NADH-ubiquinone oxidoreductase chain 3 (118 aa).

Transmembrane regions (helical) follow at residues 9–29 (IYLV…FLFA), 62–82 (LVSI…PWAV), and 87–107 (IDLF…IGFL).

The protein belongs to the complex I subunit 3 family.

The protein localises to the mitochondrion membrane. It carries out the reaction a ubiquinone + NADH + 5 H(+)(in) = a ubiquinol + NAD(+) + 4 H(+)(out). Functionally, core subunit of the mitochondrial membrane respiratory chain NADH dehydrogenase (Complex I) that is believed to belong to the minimal assembly required for catalysis. Complex I functions in the transfer of electrons from NADH to the respiratory chain. The immediate electron acceptor for the enzyme is believed to be ubiquinone. In Pinus sylvestris (Scotch pine), this protein is NADH-ubiquinone oxidoreductase chain 3 (NAD3).